Here is a 195-residue protein sequence, read N- to C-terminus: Probable DNA-directed RNA polymerase subunit delta (195 aa).

One can recognise an HTH HARE-type domain in the interval 14 to 83 (LSMIEVARAI…GDNKWGLRSW (70 aa)). Composition is skewed to acidic residues over residues 119–138 (GDED…DSYE) and 145–195 (YDDE…GEEE). Positions 119–195 (GDEDAIDYSD…SDDDAEGEEE (77 aa)) are disordered.

It belongs to the RpoE family. In terms of assembly, RNAP is composed of a core of 2 alpha, a beta and a beta' subunits. The core is associated with a delta subunit and one of several sigma factors.

In terms of biological role, participates in both the initiation and recycling phases of transcription. In the presence of the delta subunit, RNAP displays an increased specificity of transcription, a decreased affinity for nucleic acids, and an increased efficiency of RNA synthesis because of enhanced recycling. In Streptococcus gordonii (strain Challis / ATCC 35105 / BCRC 15272 / CH1 / DL1 / V288), this protein is Probable DNA-directed RNA polymerase subunit delta.